The primary structure comprises 149 residues: 3-dehydroquinate dehydratase (149 aa).

The active-site Proton acceptor is the Tyr-26. Substrate contacts are provided by Asn-78, His-84, and Asp-91. The active-site Proton donor is His-104. Substrate-binding positions include 105 to 106 (IS) and Arg-115.

Belongs to the type-II 3-dehydroquinase family. As to quaternary structure, homododecamer.

It carries out the reaction 3-dehydroquinate = 3-dehydroshikimate + H2O. It participates in metabolic intermediate biosynthesis; chorismate biosynthesis; chorismate from D-erythrose 4-phosphate and phosphoenolpyruvate: step 3/7. Catalyzes a trans-dehydration via an enolate intermediate. This is 3-dehydroquinate dehydratase (aroQ) from Buchnera aphidicola subsp. Schizaphis graminum (strain Sg).